The following is a 202-amino-acid chain: Glycoprotein U22 (202 aa).

A signal peptide spans Met1 to Ala20. 4 N-linked (GlcNAc...) asparagine; by host glycosylation sites follow: Asn54, Asn107, Asn112, and Asn125. The chain crosses the membrane as a helical span at residues Phe172–Phe192.

It localises to the membrane. The chain is Glycoprotein U22 (U22) from Homo sapiens (Human).